Consider the following 276-residue polypeptide: Anamorsin homolog (276 aa).

The N-terminal SAM-like domain stretch occupies residues 1 to 152 (MEPYVVDNLN…TRGSSIKLPW (152 aa)). The tract at residues 152–189 (WAHSDIEAAWENVDNETSYDVDKNLINTNSLLQKSDYV) is linker. Residues Cys-195, Cys-211, Cys-214, and Cys-216 each coordinate [2Fe-2S] cluster. The segment at 195–216 (CGQEFAKNSIGKRKRACKNCTC) is fe-S binding site A. [4Fe-4S] cluster is bound by residues Cys-237, Cys-240, Cys-248, and Cys-251. 2 consecutive short sequence motifs (cx2C motif) follow at residues 237-240 (CGNC) and 248-251 (CSTC). Residues 237-251 (CGNCYLGDAFRCSTC) are fe-S binding site B.

This sequence belongs to the anamorsin family. Monomer. [2Fe-2S] cluster serves as cofactor. [4Fe-4S] cluster is required as a cofactor.

It localises to the cytoplasm. Its subcellular location is the mitochondrion intermembrane space. Functionally, component of the cytosolic iron-sulfur (Fe-S) protein assembly (CIA) machinery. Required for the maturation of extramitochondrial Fe-S proteins. Part of an electron transfer chain functioning in an early step of cytosolic Fe-S biogenesis, facilitating the de novo assembly of a [4Fe-4S] cluster on the cytosolic Fe-S scaffold complex. Electrons are transferred from NADPH via a FAD- and FMN-containing diflavin oxidoreductase. Together with the diflavin oxidoreductase, also required for the assembly of the diferric tyrosyl radical cofactor of ribonucleotide reductase (RNR), probably by providing electrons for reduction during radical cofactor maturation in the catalytic small subunit. This Schistosoma japonicum (Blood fluke) protein is Anamorsin homolog.